A 238-amino-acid polypeptide reads, in one-letter code: C-reactive protein (238 aa).

The first 16 residues, 1–16 (MERFALWFIFLAGSLA), serve as a signal peptide directing secretion. Pyrrolidone carboxylic acid is present on Q17. One can recognise a Pentraxin (PTX) domain in the interval 21–223 (VGNVFLFPKP…QATTQPKRQC (203 aa)). An intrachain disulfide couples C52 to C113. D76, N77, E154, Q155, D156, and Q166 together coordinate Ca(2+).

Belongs to the pentraxin family. As to quaternary structure, homodimer; disulfide-linked. It is not known if it assembles into a pentraxin (or pentaxin) structure. Pentaxins have a discoid arrangement of 5 non-covalently bound subunits. Requires Ca(2+) as cofactor. Post-translationally, cys-89 or Cys-223 or Cys-236 could be involved in interchain disulfide linkage.

It is found in the secreted. Displays several functions associated with host defense: it promotes agglutination, bacterial capsular swelling, phagocytosis, and complement fixation through its calcium-dependent binding to phosphorylcholine. This chain is C-reactive protein (crp), found in Xenopus laevis (African clawed frog).